The sequence spans 542 residues: DM7 family protein CG15333 (542 aa).

This sequence belongs to the DM7 family.

In Drosophila melanogaster (Fruit fly), this protein is DM7 family protein CG15333.